A 254-amino-acid polypeptide reads, in one-letter code: Cobalt transport protein CbiM (254 aa).

A signal peptide spans 1–31; sequence MKTILRPFTLLSRSIFLALFVLFLWSPDAHA. 6 helical membrane-spanning segments follow: residues 37 to 57, 74 to 94, 106 to 126, 128 to 148, 169 to 189, and 212 to 232; these read GFLPPSWSLFWWVLTLPFLVV, LLLAMAGAFAFVLSSLKIPSV, LGAVLFGPSVMSVLGVIVLLF, ALLLAHGGLTTLGANAFSMAI, WLAVFLAAAIGDLMTYVVTSL, and IFALTQVPLAISEGILTVMVF.

The protein belongs to the CbiM family. In terms of assembly, forms an energy-coupling factor (ECF) transporter complex composed of an ATP-binding protein (A component, CbiO), a transmembrane protein (T component, CbiQ) and 2 possible substrate-capture proteins (S components, CbiM and CbiN) of unknown stoichimetry.

The protein localises to the cell inner membrane. The protein operates within cofactor biosynthesis; adenosylcobalamin biosynthesis. Functionally, part of the energy-coupling factor (ECF) transporter complex CbiMNOQ involved in cobalt import. The chain is Cobalt transport protein CbiM from Chlorobium limicola (strain DSM 245 / NBRC 103803 / 6330).